The sequence spans 746 residues: Histone-lysine N-methyltransferase EZH2 (746 aa).

An interaction with DNMT1, DNMT3A and DNMT3B region spans residues 1–340; sequence MGQTGKKSEK…AKEFAAALTA (340 aa). At Ser-21 the chain carries Phosphoserine; by PKB/AKT1. Residues 39 to 68 form an interaction with EED region; it reads KSMFSSNRQKILERTEILNQEWKQRRIQPV. O-linked (GlcNAc) serine glycosylation is present at Ser-75. Position 76 is a phosphoserine (Ser-76). The tract at residues 180 to 222 is disordered; it reads QYNDDDDDDDGDDPEEREEKQKDLEDHRDDKESRPPRKFPSDK. Residues 182 to 195 show a composition bias toward acidic residues; that stretch reads NDDDDDDDGDDPEE. The segment covering 196-222 has biased composition (basic and acidic residues); it reads REEKQKDLEDHRDDKESRPPRKFPSDK. An interaction with CDYL region spans residues 329 to 522; sequence EGAKEFAAAL…SSNHVYNYQP (194 aa). Phosphothreonine is present on Thr-339. Residues 340–426 are disordered; that stretch reads AERIKTPPKR…PIKMKPNIEP (87 aa). Residue Thr-345 is modified to Phosphothreonine; by CDK1 and CDK2. The segment covering 345-357 has biased composition (basic residues); that stretch reads TPPKRPGGRRRGR. Phosphoserine is present on residues Ser-363 and Ser-366. Phosphothreonine is present on Thr-367. Basic and acidic residues predominate over residues 374–385; the sequence is ESKDTDSDREAG. Thr-487 is modified (phosphothreonine). Residues 503 to 605 form the CXC domain; that stretch reads CRKIQLKKDG…SKNVSCKNCS (103 aa). Residues 612 to 727 form the SET domain; that stretch reads KHLLLAPSDV…TGEELFFDYR (116 aa). Lys-634 participates in a covalent cross-link: Glycyl lysine isopeptide (Lys-Gly) (interchain with G-Cter in SUMO2).

Belongs to the class V-like SAM-binding methyltransferase superfamily. Histone-lysine methyltransferase family. EZ subfamily. In terms of assembly, component of the PRC2/EED-EZH2 complex, which includes EED, EZH2, SUZ12, RBBP4 and RBBP7 and possibly AEBP2. The minimum components required for methyltransferase activity of the PRC2/EED-EZH2 complex are EED, EZH2 and SUZ12. The PRC2 complex may also interact with DNMT1, DNMT3A, DNMT3B and PHF1 via the EZH2 subunit and with SIRT1 via the SUZ12 subunit. Interacts with HDAC1 and HDAC2. Binds ATRX via the SET domain. Interacts with PRAME. Interacts with CDYL. Interacts with CLOCK, BMAL1 and CRY1. Interacts with DNMT3L; the interaction is direct. Interacts with EZHIP; the interaction blocks EZH2 methyltransferase activity. Interacts with ZNF263; recruited to the SIX3 promoter along with other proteins involved in chromatin modification and transcriptional corepression where it contributes to transcriptional repression. Interacts with ARMC12. Interacts with ZMYND8; the interaction is dependent on the presence of chromatin. Interacts with DDX18; this interaction inhibits the PRC2 complex. In terms of processing, phosphorylated by AKT1. Phosphorylation by AKT1 reduces methyltransferase activity. Phosphorylation at Thr-345 by CDK1 and CDK2 promotes maintenance of H3K27me3 levels at EZH2-target loci, thus leading to epigenetic gene silencing. Post-translationally, sumoylated. Glycosylated: O-GlcNAcylation at Ser-75 by OGT increases stability of EZH2 and facilitates the formation of H3K27me3 by the PRC2/EED-EZH2 complex. In terms of tissue distribution, in the ovary, expressed in primordial follicles and oocytes and also in external follicle cells (at protein level). Expressed in many tissues. Overexpressed in numerous tumor types including carcinomas of the breast, colon, larynx, lymphoma and testis.

It localises to the nucleus. It carries out the reaction L-lysyl(27)-[histone H3] + 3 S-adenosyl-L-methionine = N(6),N(6),N(6)-trimethyl-L-lysyl(27)-[histone H3] + 3 S-adenosyl-L-homocysteine + 3 H(+). In terms of biological role, polycomb group (PcG) protein. Catalytic subunit of the PRC2/EED-EZH2 complex, which methylates 'Lys-9' (H3K9me) and 'Lys-27' (H3K27me) of histone H3, leading to transcriptional repression of the affected target gene. Able to mono-, di- and trimethylate 'Lys-27' of histone H3 to form H3K27me1, H3K27me2 and H3K27me3, respectively. Displays a preference for substrates with less methylation, loses activity when progressively more methyl groups are incorporated into H3K27, H3K27me0 &gt; H3K27me1 &gt; H3K27me2. Compared to EZH1-containing complexes, it is more abundant in embryonic stem cells and plays a major role in forming H3K27me3, which is required for embryonic stem cell identity and proper differentiation. The PRC2/EED-EZH2 complex may also serve as a recruiting platform for DNA methyltransferases, thereby linking two epigenetic repression systems. Genes repressed by the PRC2/EED-EZH2 complex include HOXC8, HOXA9, MYT1, CDKN2A and retinoic acid target genes. EZH2 can also methylate non-histone proteins such as the transcription factor GATA4 and the nuclear receptor RORA. Regulates the circadian clock via histone methylation at the promoter of the circadian genes. Essential for the CRY1/2-mediated repression of the transcriptional activation of PER1/2 by the CLOCK-BMAL1 heterodimer; involved in the di and trimethylation of 'Lys-27' of histone H3 on PER1/2 promoters which is necessary for the CRY1/2 proteins to inhibit transcription. The protein is Histone-lysine N-methyltransferase EZH2 of Homo sapiens (Human).